Here is a 215-residue protein sequence, read N- to C-terminus: MOB kinase activator-like 1B (215 aa).

The segment at 1-25 (MSLFGLGRNQKTFRPKKSAPSGTKG) is disordered. The Zn(2+) site is built by cysteine 79, cysteine 84, histidine 161, and histidine 166.

The protein belongs to the MOB1/phocein family. Interacts with SIK1. Expression is detected along the vasculature in cotyledons, hypocotyls and roots of 3- to 4-day-old seedlings.

This Arabidopsis thaliana (Mouse-ear cress) protein is MOB kinase activator-like 1B.